The primary structure comprises 164 residues: Cyclic pyranopterin monophosphate synthase (164 aa).

Substrate contacts are provided by residues 77–79 (LCH) and 115–116 (ME). The active site involves Asp130.

It belongs to the MoaC family. Homohexamer; trimer of dimers.

It catalyses the reaction (8S)-3',8-cyclo-7,8-dihydroguanosine 5'-triphosphate = cyclic pyranopterin phosphate + diphosphate. Its pathway is cofactor biosynthesis; molybdopterin biosynthesis. Catalyzes the conversion of (8S)-3',8-cyclo-7,8-dihydroguanosine 5'-triphosphate to cyclic pyranopterin monophosphate (cPMP). This chain is Cyclic pyranopterin monophosphate synthase, found in Sinorhizobium medicae (strain WSM419) (Ensifer medicae).